The primary structure comprises 218 residues: Ribosomal RNA large subunit methyltransferase E (218 aa).

The S-adenosyl-L-methionine site is built by Gly64, Trp66, Asp92, Asp108, and Asp133. Catalysis depends on Lys173, which acts as the Proton acceptor.

This sequence belongs to the class I-like SAM-binding methyltransferase superfamily. RNA methyltransferase RlmE family.

It localises to the cytoplasm. The catalysed reaction is uridine(2552) in 23S rRNA + S-adenosyl-L-methionine = 2'-O-methyluridine(2552) in 23S rRNA + S-adenosyl-L-homocysteine + H(+). Functionally, specifically methylates the uridine in position 2552 of 23S rRNA at the 2'-O position of the ribose in the fully assembled 50S ribosomal subunit. This is Ribosomal RNA large subunit methyltransferase E from Paracidovorax citrulli (strain AAC00-1) (Acidovorax citrulli).